A 3391-amino-acid chain; its full sequence is MNNQRKKARSTPFNMLKRERNRVSTVQQLTKRFSLGMLQGRGPLKLFMALVAFLRFLTIPPTAGILKRWGTIKKSKAINVLRGFRKEIGRMLNILNRRRRTAGVIIMLIPTAMAFHLTTRNGEPHMIVGRQEKGKSLLFKTEDGVNMCTLMAIDLGELCEDTITYKCPLLRQNEPEDIDCWCNSTSTWVTYGTCATTGEHRREKRSVALVPHVGMGLETRTETWMSSEGAWKHVQRIETWILRHPGFTIMAAILAYTIGTTHFQRALIFILLTAVAPSMTMRCIGISNRDFVEGVSGGSWVDIVLEHGSCVTTMAKNKPTLDFELIKTEAKQPATLRKYCIEAKLTNTTTESRCPTQGEPSLNEEQDKRFLCKHSMVDRGWGNGCGLFGKGGIVTCAMFTCKKNMEGKVVLPENLEYTIVITPHSGEEHAVGNDTGKHGKEIKITPQSSITEAELTGYGTVTMECSPRTGLDFNEMVLLQMEDKAWLVHRQWFLDLPLPWLPGADTQGSNWIQKETLVTFKNPHAKKQDVVVLGSQEGAMHTALTGATEIQMSSGNLLFTGHLKCRLRMDKLQLKGMSYSMCTGKFKIVKEIAETQHGTIVIRVQYEGDGSPCKIPFEIMDLEKRHVLGRLITVNPIVTEKDSPVNIEAEPPFGDSYIIIGVEPGQLKLNWFKKGSSIGQMFETTMRGAKRMAILGDTAWDFGSLGGVFTSIGKALHQVFGAIYGAAFSGVSWTMKILIGVIITWIGMNSRSTSLSVSLVLVGVVTLYLGAMVQADSGCVVSWKNKELKCGSGIFITDNVHTWTEQYKFQPESPSKLASAIQKAHEEGICGIRSVTRLENLMWKQITPELNHILSENEVKLTIMTGDIKGIMQAGKRSLRPQPTELKYSWKTWGKAKMLSTESHNQTFLIDGPETAECPNTNRAWNSLEVEDYGFGVFTTNIWLKLREKQDVFCDSKLMSAAIKDNRAVHADMGYWIESALNDTWKMEKASFIEVKSCHWPKSHTLWSNGVLESEMIIPKNFAGPVSQHNYRPGYHTQTAGPWHLGKLEMDFDFCEGTTVVVTEDCGNRGPSLRTTTASGKLITEWCCRSCTLPPLRYRGEDGCWYGMEIRPLKEKEENLVNSLVTAGHGQIDNFSLGVLGMALFLEEMLRTRVGTKHAILLVAVSFVTLITGNMSFRDLGRVMVMVGATMTDDIGMGVTYLALLAAFKVRPTFAAGLLLRKLTSKELMMATIGIALLSQSTIPETILELTDALALGMMVLKIVRNMEKYQLAVTIMAILCVPNAVILQNAWKVSCTILAAVSVSPLLLTSSQQKADWIPLALTIKGLNPTAIFLTTLSRTSKKRSWPLNEAIMAVGMVSILASSLLKNDIPMTGPLVAGGLLTVCYVLTGRSADLELERAADVKWEDQAEISGSSPILSITISEDGSMSIKNEEEEQTLTILIRTGLLVISGVFPVSIPITAAAWYLWEVKKQRAGVLWDVPSPPPVGKAELEDGAYRIKQRGILGYSQIGAGVYKEGTFHTMWHVTRGAVLMHKGKRIEPSWADVKKDLISYGGGWKLEGEWKEGEEVQVLALEPGKNPRAVQTKPGLFKTNTGTIGAVSLDFSPGTSGSPIVDRKGKVVGLYGNGVVTRSGAYVSAIAQTEKSIEDNPEIEDDIFRKKRLTIMDLHPGAGKTKRYLPAIVREAIKRGLRTLILAPTRVVAAEMEEALRGLPIRYQTPAIRAEHTGREIVDLMCHATFTMRLLSPVRVPNYNLIIMDEAHFTDPASIAARGYISTRVEMGEAAGIFMTATPPGSRDPFPQSNAPIMDEEREIPERSWNSGHEWVTDFKGKTVWFVPSIKAGNDIAACLRKNGKKVIQLSRKTFDSEYVKTRANDWDFVVTTDISEMGANFKAERVIDPRRCMKPVILTDGEERVILAGPMPVTHSSAAQRRGRIGRNPKNENDQYIYMGEPLENDEDCAHWKEAKMLLDNINTPEGIIPSMFEPEREKVDAIDGEYRLRGEARKTFVDLMRRGDLPVWLAYRVAAEGINYADRRWCFDGIKNNQILEENVEVEIWTKEGERKKLKPRWLDARIYSDPLALKEFKEFAAGRKSLTLNLITEMGRLPTFMTQKARDALDNLAVLHTAEAGGRAYNHALSELPETLETLLLLTLLATVTGGIFLFLMSGKGIGKMTLGMCCIITASILLWYAQIQPHWIAASIILEFFLIVLLIPEPEKQRTPQDNQLTYVVIAILTVVAATMANEMGFLEKTKKDLGLGSITTQESESNILDIDLRPASAWTLYAVATTFVTPMLRHSIENSSVNVSLTAIANQATVLMGLGKGWPLSKIHIGVPLLAIGCYSQVNPITLTAALLLLVAHYAIIGPGLQAKATREAQKRAAAGIMKNPTVDGITVIDLDPIPYDPKFEKQLGQVMLLILCVTQVLMMRTTWALCEALTLATGPISTLWEGNPGRFWNTTIAVSMANIFRGSYLAGAGLLFSIMKNTTNTRRGTGNIGETLGEKWKSRLNALGKSEFQIYKKSGIQEVDRTLAKEGIKRGETDHHAVSRGSAKLRWFVERNMVTPEGKVVDLGCGRGGWSYYCGGLKNVREVKGLTKGGPGHEEPIPMSTYGWNLVRLQSGVDVFFTPPEKCDTLLCDIGESSPNPTIEAGRTLRVLNLVENWLNNNTQFCIKVLNPYMPSVIEKMETLQRKYGGALVRNPLSRNSTHEMYWVSNASGNIVSSVNMISRMLINRFTMKHKKATYETDVDLGSGTRNIGIESEIPNLDIIGKRIEKIKQEHETSWHYDQDHPYKTWAYHGSYETKQTGSASSMVNGVVRLLTKPWDVVPMVTQMAMTDTTPFGQQRVFKEKVDTRTQEPKEGTKKLMKITAEWLWKELGKKKTPRMCTREEFTRKVRSNAALGAIFTDENKWKSAREAVEDSRFWELVDRERNLHLEGKCETCVYNMMGKREKKLGEFGKAKGSRAIWYMWLGARFLEFEALGFLNEDHWFSRGNSLSGVEGEGLHKLGYILRDVSKKEGGAMYADDTAGWDTRITLEDLKNEEMVTNHMEGEHKKLAEAIFKLTYQNKVVRVQRPTPRGTVMDIISRRDQRGSGQVGTYGLNTFTNMEAQLIRQMEGEGIFKSIQHLTVTEEIAVQNWLARVGRERLSRMAISGDDCVVKPLDDRFASALTALNDMGKVRKDIQQWEPSRGWNDWTQVPFCSHHFHELVMKDGRVLVVPCRNQDELIGRARISQGAGWSLKETACLGKSYAQMWTLMYFHRRDLRLAANAICSAVPSHWVPTSRTTWSIHAKHEWMTTEDMLAVWNRVWIQENPWMEDKTPVESWEEVPYLGKREDQWCGSLIGLTSRATWAKNIQTAINQVRSLIGNEEYTDYMPSMKRFRREEEEAGVLW.

The segment at 1-15 (MNNQRKKARSTPFNM) is interaction with host EXOC1. Residues 1–101 (MNNQRKKARS…LNILNRRRRT (101 aa)) are Cytoplasmic-facing. The tract at residues 37–72 (MLQGRGPLKLFMALVAFLRFLTIPPTAGILKRWGTI) is hydrophobic; homodimerization of capsid protein C. The propeptide at 101-114 (TAGVIIMLIPTAMA) is ER anchor for the capsid protein C, removed in mature form by serine protease NS3. Residues 102-119 (AGVIIMLIPTAMAFHLTT) traverse the membrane as a helical segment. Topologically, residues 120 to 241 (RNGEPHMIVG…KHVQRIETWI (122 aa)) are extracellular. A glycan (N-linked (GlcNAc...) asparagine; by host) is linked at Asn183. The helical transmembrane segment at 242–259 (LRHPGFTIMAAILAYTIG) threads the bilayer. The Cytoplasmic segment spans residues 260–265 (TTHFQR). The chain crosses the membrane as a helical span at residues 266–280 (ALIFILLTAVAPSMT). At 281–725 (MRCIGISNRD…LHQVFGAIYG (445 aa)) the chain is on the extracellular side. Cystine bridges form between Cys283–Cys310, Cys340–Cys401, Cys354–Cys385, and Cys372–Cys396. An N-linked (GlcNAc...) asparagine; by host glycan is attached at Asn347. The tract at residues 378–391 (DRGWGNGCGLFGKG) is fusion peptide. The N-linked (GlcNAc...) asparagine; by host glycan is linked to Asn433. Cystine bridges form between Cys465–Cys565 and Cys582–Cys613. Residues 726-746 (AAFSGVSWTMKILIGVIITWI) traverse the membrane as a helical segment. The Cytoplasmic segment spans residues 747 to 752 (GMNSRS). A helical transmembrane segment spans residues 753–773 (TSLSVSLVLVGVVTLYLGAMV). Residues 774 to 1195 (QADSGCVVSW…MVGATMTDDI (422 aa)) are Extracellular-facing. Cystine bridges form between Cys779/Cys790, Cys830/Cys918, Cys954/Cys998, Cys1055/Cys1104, Cys1066/Cys1088, and Cys1087/Cys1091. 2 N-linked (GlcNAc...) asparagine; by host glycosylation sites follow: Asn905 and Asn982. Asn1134 carries N-linked (GlcNAc...) asparagine; by host glycosylation. The helical transmembrane segment at 1196–1220 (GMGVTYLALLAAFKVRPTFAAGLLL) threads the bilayer. Topologically, residues 1221-1226 (RKLTSK) are cytoplasmic. Residues 1227–1245 (ELMMATIGIALLSQSTIPE) traverse the membrane as a helical segment. Residues 1246 to 1269 (TILELTDALALGMMVLKIVRNMEK) are Lumenal-facing. The chain crosses the membrane as a helical span at residues 1270–1290 (YQLAVTIMAILCVPNAVILQN). Position 1291 (Ala1291) is a topological domain, cytoplasmic. Residues 1292 to 1310 (WKVSCTILAAVSVSPLLLT) form a helical membrane-spanning segment. The Lumenal segment spans residues 1311–1317 (SSQQKAD). A helical transmembrane segment spans residues 1318-1338 (WIPLALTIKGLNPTAIFLTTL). Residues 1339-1346 (SRTSKKRS) lie on the Cytoplasmic side of the membrane. Residues 1347-1367 (WPLNEAIMAVGMVSILASSLL) form a helical membrane-spanning segment. Over 1368–1370 (KND) the chain is Lumenal. Residues 1371 to 1391 (IPMTGPLVAGGLLTVCYVLTG) form a helical membrane-spanning segment. Residues 1392–1447 (RSADLELERAADVKWEDQAEISGSSPILSITISEDGSMSIKNEEEEQTLTILIRTG) lie on the Cytoplasmic side of the membrane. Residues 1398 to 1437 (LERAADVKWEDQAEISGSSPILSITISEDGSMSIKNEEEE) form an interacts with and activates NS3 protease region. The segment at residues 1448 to 1468 (LLVISGVFPVSIPITAAAWYL) is an intramembrane region (helical). Over 1469 to 2147 (WEVKKQRAGV…LSELPETLET (679 aa)) the chain is Cytoplasmic. Positions 1476–1653 (AGVLWDVPSP…EKSIEDNPEI (178 aa)) constitute a Peptidase S7 domain. Catalysis depends on charge relay system; for serine protease NS3 activity residues His1526, Asp1550, and Ser1610. Residues 1655-1811 (DDIFRKKRLT…QSNAPIMDEE (157 aa)) form the Helicase ATP-binding domain. The interval 1659-1662 (RKKR) is important for RNA-binding. ATP is bound at residue 1668–1675 (LHPGAGKT). Residues 1759 to 1762 (DEAH) carry the DEAH box motif. Residues 1821–1988 (SGHEWVTDFK…IIPSMFEPER (168 aa)) enclose the Helicase C-terminal domain. An N6-acetyllysine; by host modification is found at Lys1863. Residues 2148–2168 (LLLLTLLATVTGGIFLFLMSG) traverse the membrane as a helical segment. Residues 2169–2170 (KG) lie on the Lumenal side of the membrane. Residues 2171 to 2191 (IGKMTLGMCCIITASILLWYA) constitute an intramembrane region (helical). Position 2192 (Gln2192) is a topological domain, lumenal. Residues 2193–2213 (IQPHWIAASIILEFFLIVLLI) form a helical membrane-spanning segment. Residues 2214–2228 (PEPEKQRTPQDNQLT) lie on the Cytoplasmic side of the membrane. A helical membrane pass occupies residues 2229–2249 (YVVIAILTVVAATMANEMGFL). At 2250 to 2274 (EKTKKDLGLGSITTQESESNILDID) the chain is on the lumenal side. The segment at residues 2275–2295 (LRPASAWTLYAVATTFVTPML) is an intramembrane region (helical). Topologically, residues 2296–2316 (RHSIENSSVNVSLTAIANQAT) are lumenal. Residues Asn2301 and Asn2305 are each glycosylated (N-linked (GlcNAc...) asparagine; by host). The helical intramembrane region spans 2317–2337 (VLMGLGKGWPLSKIHIGVPLL). The Lumenal segment spans residues 2338 to 2347 (AIGCYSQVNP). The helical transmembrane segment at 2348–2368 (ITLTAALLLLVAHYAIIGPGL) threads the bilayer. Residues 2369-2413 (QAKATREAQKRAAAGIMKNPTVDGITVIDLDPIPYDPKFEKQLGQ) lie on the Cytoplasmic side of the membrane. Residues 2414–2434 (VMLLILCVTQVLMMRTTWALC) traverse the membrane as a helical segment. Over 2435–2459 (EALTLATGPISTLWEGNPGRFWNTT) the chain is Lumenal. A glycan (N-linked (GlcNAc...) asparagine; by host) is linked at Asn2457. The helical transmembrane segment at 2460 to 2480 (IAVSMANIFRGSYLAGAGLLF) threads the bilayer. Topologically, residues 2481 to 3391 (SIMKNTTNTR…REEEEAGVLW (911 aa)) are cytoplasmic. One can recognise an mRNA cap 0-1 NS5-type MT domain in the interval 2493–2755 (TGNIGETLGE…DVDLGSGTRN (263 aa)). Ser2547 contributes to the S-adenosyl-L-methionine binding site. The residue at position 2547 (Ser2547) is a Phosphoserine. Lys2552 serves as the catalytic For 2'-O-MTase activity. Positions 2568-2571 (VVDL) match the SUMO-interacting motif motif. Positions 2577, 2578, 2595, 2596, 2622, and 2623 each coordinate S-adenosyl-L-methionine. The For 2'-O-MTase activity role is filled by Asp2637. Residue Ile2638 participates in S-adenosyl-L-methionine binding. Residues Lys2672 and Glu2708 each act as for 2'-O-MTase activity in the active site. Tyr2710 is a binding site for S-adenosyl-L-methionine. Residues Glu2929, His2933, Cys2938, and Cys2941 each contribute to the Zn(2+) site. The region spanning 3020–3169 (AMYADDTAGW…PLDDRFASAL (150 aa)) is the RdRp catalytic domain. Positions 3203, 3219, and 3338 each coordinate Zn(2+).

The protein in the N-terminal section; belongs to the class I-like SAM-binding methyltransferase superfamily. mRNA cap 0-1 NS5-type methyltransferase family. As to quaternary structure, homodimer. Interacts (via N-terminus) with host EXOC1 (via C-terminus); this interaction results in EXOC1 degradation through the proteasome degradation pathway. Forms heterodimers with envelope protein E in the endoplasmic reticulum and Golgi. In terms of assembly, homodimer; in the endoplasmic reticulum and Golgi. Interacts with protein prM. Interacts with non-structural protein 1. As to quaternary structure, homodimer; Homohexamer when secreted. Interacts with envelope protein E. Interacts with host PRKAA1. Interacts (via N-terminus) with serine protease NS3. In terms of assembly, forms a heterodimer with serine protease NS3. May form homooligomers. As to quaternary structure, forms a heterodimer with NS2B. Interacts with NS4B. Interacts with unphosphorylated RNA-directed RNA polymerase NS5; this interaction stimulates RNA-directed RNA polymerase NS5 guanylyltransferase activity. Interacts with host SHFL. Interacts with host MAVS; this interaction inhibits the synthesis of IFN-beta. Interacts with host SHFL. Interacts with host AUP1; the interaction occurs in the presence of Dengue virus NS4B and induces lipophagy which facilitates production of virus progeny particles. May interact with host SRPRA and SEC61G. In terms of assembly, interacts with serine protease NS3. As to quaternary structure, homodimer. Interacts with host STAT2; this interaction inhibits the phosphorylation of the latter, and, when all viral proteins are present (polyprotein), targets STAT2 for degradation. Interacts with serine protease NS3. Interacts with host PAF1 complex; the interaction may prevent the recruitment of the PAF1 complex to interferon-responsive genes, and thus reduces the immune response. Specific enzymatic cleavages in vivo yield mature proteins. Cleavages in the lumen of endoplasmic reticulum are performed by host signal peptidase, whereas cleavages in the cytoplasmic side are performed by serine protease NS3. Signal cleavage at the 2K-4B site requires a prior NS3 protease-mediated cleavage at the 4A-2K site. In terms of processing, cleaved in post-Golgi vesicles by a host furin, releasing the mature small envelope protein M, and peptide pr. This cleavage is incomplete as up to 30% of viral particles still carry uncleaved prM. Post-translationally, N-glycosylated. N-glycosylated. The excreted form is glycosylated and this is required for efficient secretion of the protein from infected cells. In terms of processing, acetylated by host KAT5. Acetylation modulates NS3 RNA-binding and unwinding activities and plays an important positive role for viral replication. Post-translationally, sumoylation of RNA-directed RNA polymerase NS5 increases NS5 protein stability allowing proper viral RNA replication. Phosphorylated on serines residues. This phosphorylation may trigger NS5 nuclear localization.

Its subcellular location is the virion. It is found in the host nucleus. It localises to the host cytoplasm. The protein localises to the host perinuclear region. The protein resides in the secreted. Its subcellular location is the virion membrane. It is found in the host endoplasmic reticulum membrane. It localises to the host mitochondrion. The catalysed reaction is Selective hydrolysis of -Xaa-Xaa-|-Yaa- bonds in which each of the Xaa can be either Arg or Lys and Yaa can be either Ser or Ala.. It carries out the reaction RNA(n) + a ribonucleoside 5'-triphosphate = RNA(n+1) + diphosphate. The enzyme catalyses a ribonucleoside 5'-triphosphate + H2O = a ribonucleoside 5'-diphosphate + phosphate + H(+). It catalyses the reaction ATP + H2O = ADP + phosphate + H(+). The catalysed reaction is a 5'-end (5'-triphosphoguanosine)-ribonucleoside in mRNA + S-adenosyl-L-methionine = a 5'-end (N(7)-methyl 5'-triphosphoguanosine)-ribonucleoside in mRNA + S-adenosyl-L-homocysteine. It carries out the reaction a 5'-end (N(7)-methyl 5'-triphosphoguanosine)-ribonucleoside in mRNA + S-adenosyl-L-methionine = a 5'-end (N(7)-methyl 5'-triphosphoguanosine)-(2'-O-methyl-ribonucleoside) in mRNA + S-adenosyl-L-homocysteine + H(+). In terms of biological role, plays a role in virus budding by binding to the cell membrane and gathering the viral RNA into a nucleocapsid that forms the core of a mature virus particle. During virus entry, may induce genome penetration into the host cytoplasm after hemifusion induced by the surface proteins. Can migrate to the cell nucleus where it modulates host functions. Overcomes the anti-viral effects of host EXOC1 by sequestering and degrading the latter through the proteasome degradation pathway. Inhibits RNA silencing by interfering with host Dicer. Functionally, prevents premature fusion activity of envelope proteins in trans-Golgi by binding to envelope protein E at pH6.0. After virion release in extracellular space, gets dissociated from E dimers. Its function is as follows. Acts as a chaperone for envelope protein E during intracellular virion assembly by masking and inactivating envelope protein E fusion peptide. prM is the only viral peptide matured by host furin in the trans-Golgi network probably to avoid catastrophic activation of the viral fusion activity in acidic Golgi compartment prior to virion release. prM-E cleavage is inefficient, and many virions are only partially matured. These uncleaved prM would play a role in immune evasion. In terms of biological role, may play a role in virus budding. Exerts cytotoxic effects by activating a mitochondrial apoptotic pathway through M ectodomain. May display a viroporin activity. Binds to host cell surface receptor and mediates fusion between viral and cellular membranes. Envelope protein is synthesized in the endoplasmic reticulum in the form of heterodimer with protein prM. They play a role in virion budding in the ER, and the newly formed immature particle is covered with 60 spikes composed of heterodimer between precursor prM and envelope protein E. The virion is transported to the Golgi apparatus where the low pH causes dissociation of PrM-E heterodimers and formation of E homodimers. prM-E cleavage is inefficient, and many virions are only partially matured. These uncleaved prM would play a role in immune evasion. Functionally, involved in immune evasion, pathogenesis and viral replication. Once cleaved off the polyprotein, is targeted to three destinations: the viral replication cycle, the plasma membrane and the extracellular compartment. Essential for viral replication. Required for formation of the replication complex and recruitment of other non-structural proteins to the ER-derived membrane structures. Excreted as a hexameric lipoparticle that plays a role against host immune response. Antagonizing the complement function. Binds to the host macrophages and dendritic cells. Inhibits signal transduction originating from Toll-like receptor 3 (TLR3). Its function is as follows. Involved in immune evasion, pathogenesis and viral replication. Once cleaved off the polyprotein, is targeted to three destinations: the viral replication cycle, the plasma membrane and the extracellular compartment. Essential for viral replication. Required for formation of the replication complex and recruitment of other non-structural proteins to the ER-derived membrane structures. Excreted as a hexameric lipoparticle that plays a role against host immune response. Antagonizing the complement function. Binds to the host macrophages and dendritic cells. Inhibits signal transduction originating from Toll-like receptor 3 (TLR3). Mediates complement activation, which may contribute to the pathogenesis of the vascular leakage that occurs in severe dengue disease. Activates autophagy through the AMPK/ERK/mTOR signaling pathway. Mechanistically, acts as the assembly platform for STK11-AMPK interactions and promotes STK11-AMPK interactions. In turn, promotes phosphorylation of the AMPK kinase structural domain and activates AMPK, thereby positively regulating the AMPK/ERK/mTOR signaling pathway and inducing autophagy. In terms of biological role, component of the viral RNA replication complex that functions in virion assembly and antagonizes the host immune response. Required cofactor for the serine protease function of NS3. May have membrane-destabilizing activity and form viroporins. Functionally, displays three enzymatic activities: serine protease, NTPase and RNA helicase. NS3 serine protease, in association with NS2B, performs its autocleavage and cleaves the polyprotein at dibasic sites in the cytoplasm: C-prM, NS2A-NS2B, NS2B-NS3, NS3-NS4A, NS4A-2K and NS4B-NS5. NS3 RNA helicase binds RNA and unwinds dsRNA in the 3' to 5' direction. Its function is as follows. Regulates the ATPase activity of the NS3 helicase activity. NS4A allows NS3 helicase to conserve energy during unwinding. Plays a role in the inhibition of the host innate immune response. Interacts with host MAVS and thereby prevents the interaction between RIGI and MAVS. In turn, IFN-beta production is impaired. Interacts with host AUP1 which mediates induction of lipophagy in host cells and facilitates production of virus progeny particles. In terms of biological role, functions as a signal peptide for NS4B and is required for the interferon antagonism activity of the latter. Induces the formation of ER-derived membrane vesicles where the viral replication takes place. Inhibits interferon (IFN)-induced host STAT1 phosphorylation and nuclear translocation, thereby preventing the establishment of cellular antiviral state by blocking the IFN-alpha/beta pathway. Functionally, replicates the viral (+) and (-) RNA genome, and performs the capping of genomes in the cytoplasm. NS5 methylates viral RNA cap at guanine N-7 and ribose 2'-O positions. Besides its role in RNA genome replication, also prevents the establishment of cellular antiviral state by blocking the interferon-alpha/beta (IFN-alpha/beta) signaling pathway. Inhibits host TYK2 and STAT2 phosphorylation, thereby preventing activation of JAK-STAT signaling pathway. May reduce immune responses by preventing the recruitment of the host PAF1 complex to interferon-responsive genes. The polypeptide is Genome polyprotein (Dengue virus type 2 (strain Jamaica/1409/1983) (DENV-2)).